We begin with the raw amino-acid sequence, 387 residues long: Mannitol-1-phosphate 5-dehydrogenase (387 aa).

NAD(+) is bound at residue 3–14; that stretch reads ALHFGAGNIGRG.

It belongs to the mannitol dehydrogenase family.

The enzyme catalyses D-mannitol 1-phosphate + NAD(+) = beta-D-fructose 6-phosphate + NADH + H(+). The polypeptide is Mannitol-1-phosphate 5-dehydrogenase (Yersinia pseudotuberculosis serotype O:1b (strain IP 31758)).